Reading from the N-terminus, the 772-residue chain is Gelsolin (772 aa).

The signal sequence occupies residues 1–17; the sequence is LGALVVALCALSPPARA. Residues 18–33 constitute a propeptide that is removed on maturation; it reads ATASRGAPQARAPQGR. The tract at residues 19-38 is disordered; sequence TASRGAPQARAPQGRVSPMR. Residues 41 to 166 form an actin-severing region; it reads TMVVEHPEFL…YKKGGVASGF (126 aa). One copy of the Gelsolin-like 1 repeat lies at 66–148; that stretch reads FDLVPVPPNL…VQGFESATFL (83 aa). Y76 carries the post-translational modification Phosphotyrosine. Ca(2+) contacts are provided by G82, D83, E114, D126, G131, and A133. Positions 113–116 are actin-actin interfilament contact point; sequence DESG. Residue 152-159 coordinates a 1,2-diacyl-sn-glycero-3-phospho-(1D-myo-inositol-4,5-bisphosphate); the sequence is KSGLKYKK. Residue V162 coordinates Ca(2+). 178-186 contacts a 1,2-diacyl-sn-glycero-3-phospho-(1D-myo-inositol-4,5-bisphosphate); the sequence is RLFQVKGRR. The stretch at 188–260 is one Gelsolin-like 2 repeat; that stretch reads VRATEVPVSW…SEEDAEPAGM (73 aa). G203 and D204 together coordinate Ca(2+). C205 and C218 are disulfide-bonded. Ca(2+)-binding residues include E226, D276, E319, D320, and E344. The stretch at 307–379 is one Gelsolin-like 3 repeat; that stretch reads DENPFAQGAL…LPEGGETPLF (73 aa). 2 positions are modified to phosphotyrosine: Y399 and Y455. Residues 424 to 772 form an actin-binding, Ca-sensitive region; sequence AAQHGMDDDG…LDRAIAELAA (349 aa). A Gelsolin-like 4 repeat occupies 445 to 526; the sequence is SNKVPVDPAT…VQGKEPAHLM (82 aa). Ca(2+)-binding residues include G461, D462, E492, D504, G509, P511, and T541. The Gelsolin-like 5 repeat unit spans residues 567 to 632; sequence RAVEVIPKAG…AEGSEPDSFW (66 aa). N6-acetyllysine is present on K574. N581 and D582 together coordinate Ca(2+). Y593 is subject to Phosphotyrosine. E604 provides a ligand contact to Ca(2+). A Phosphotyrosine modification is found at Y641. The Gelsolin-like 6 repeat unit spans residues 671–746; it reads VEEVPGELMQ…VKQGFEPPSF (76 aa). Residues D686, D687, and E709 each contribute to the Ca(2+) site. At T732 the chain carries Phosphothreonine.

Belongs to the villin/gelsolin family. As to quaternary structure, binds to actin and to fibronectin. Identified in a complex composed of ACTA1, COBL, GSN and TMSB4X. Interacts with the inactive form of EIF2AK2/PKR. Interacts with FLII. In terms of processing, phosphorylated on tyrosine residues in vitro.

It localises to the cytoplasm. It is found in the cytoskeleton. Its subcellular location is the secreted. Calcium-regulated, actin-modulating protein that binds to the plus (or barbed) ends of actin monomers or filaments, preventing monomer exchange (end-blocking or capping). It can promote the assembly of monomers into filaments (nucleation) as well as sever filaments already formed. Plays a role in ciliogenesis. In Sus scrofa (Pig), this protein is Gelsolin (GSN).